The primary structure comprises 43 residues: AAPCSCPGKPGRGDLWIFRGTCPGGYGYTSNCYKWPNICCYPH.

Intrachain disulfides connect Cys4–Cys39, Cys6–Cys32, and Cys22–Cys40.

It localises to the secreted. The protein resides in the nematocyst. In terms of biological role, blocks Kv3 voltage-gated potassium channels. Reduces blood pressure. In Anemonia viridis (Snakelocks anemone), this protein is Kappa-actitoxin-Avd4p.